Consider the following 1257-residue polypeptide: Neural cell adhesion molecule L1 (1257 aa).

Residues 1–19 (MVVALRYVWPLLLCSPCLL) form the signal peptide. Topologically, residues 20-1120 (IQIPEEYEGH…RLPPAGFATE (1101 aa)) are extracellular. Ig-like C2-type domains follow at residues 35-125 (PVIT…TAMS), 139-226 (PKET…EPID), 240-328 (PRLL…YYVT), 333-420 (PYWL…AYIY), 425-507 (PAKI…NNVT), and 518-607 (TQIT…AQLL). 2 disulfides stabilise this stretch: cysteine 57–cysteine 114 and cysteine 158–cysteine 209. Asparagine 100, asparagine 203, asparagine 247, and asparagine 294 each carry an N-linked (GlcNAc...) asparagine glycan. Intrachain disulfides connect cysteine 264–cysteine 312 and cysteine 354–cysteine 404. Residues asparagine 433, asparagine 479, asparagine 490, and asparagine 505 are each glycosylated (N-linked (GlcNAc...) asparagine). Cysteine 448 and cysteine 497 are disulfide-bonded. Cysteine 539 and cysteine 591 are joined by a disulfide. Residues 554–556 (RGD) carry the Cell attachment site motif. Residues asparagine 588 and asparagine 671 are each glycosylated (N-linked (GlcNAc...) asparagine). 5 Fibronectin type-III domains span residues 615–712 (VPRL…TPEA), 717–810 (NPVD…SGED), 814–916 (AIPE…TPEG), 920–1015 (HPEA…MALS), and 1016–1115 (GISD…LPPA). The disordered stretch occupies residues 698–725 (GEPSPVSETVVTPEAAPEKNPVDVKGEG). A compositionally biased stretch (basic and acidic residues) spans 713-725 (APEKNPVDVKGEG). Residues asparagine 726, asparagine 777, asparagine 825, asparagine 849, asparagine 876, asparagine 979, asparagine 1022, asparagine 1030, asparagine 1071, and asparagine 1105 are each glycosylated (N-linked (GlcNAc...) asparagine). Residues 1121 to 1143 (GWFIGFVSAIILLLLVLLILCFI) form a helical membrane-spanning segment. At 1144–1257 (KRSKGGKYSV…SPINPAVALE (114 aa)) the chain is on the cytoplasmic side. Phosphoserine occurs at positions 1163, 1172, 1177, and 1178. A compositionally biased stretch (basic and acidic residues) spans 1176–1187 (YRSLESDNEEKA). Disordered regions lie at residues 1176–1207 (YRSL…SDDS) and 1226–1257 (IGQY…VALE). Serine 1181 is subject to Phosphoserine; by CaMK2. Phosphoserine occurs at positions 1194, 1243, 1244, and 1248. Over residues 1241–1250 (NDSSGATSPI) the composition is skewed to polar residues.

The protein belongs to the immunoglobulin superfamily. L1/neurofascin/NgCAM family. As to quaternary structure, interacts with SHTN1; the interaction occurs in axonal growth cones. Interacts with isoform 2 of BSG.

It localises to the cell membrane. The protein localises to the cell projection. Its subcellular location is the growth cone. The protein resides in the axon. It is found in the dendrite. In terms of biological role, neural cell adhesion molecule involved in the dynamics of cell adhesion and in the generation of transmembrane signals at tyrosine kinase receptors. During brain development, critical in multiple processes, including neuronal migration, axonal growth and fasciculation, and synaptogenesis. In the mature brain, plays a role in the dynamics of neuronal structure and function, including synaptic plasticity. This Homo sapiens (Human) protein is Neural cell adhesion molecule L1 (L1CAM).